We begin with the raw amino-acid sequence, 342 residues long: MPITAQQALQRTIEHREIFHDEMLHLMRMIMNGELSPAMTAAIITGLRVKKETIGEITAAAQVMREFSTKVQVPDRKHLVDIVGTGGDGASTFNISTCAMFVAAAAGAKVSKHGGRSVSSKSGSADVMEALGIHIHLAPEAIARCIAEVGIGFMFAPNHHPAMKNVAPVRKELGVRTIFNILGPLTNPAEAPHVLVGVFHPDLVGIQVRALQRLGAEHVLVVYGRDGMDEASLGAATLVGELKNGQISEYDIHPEDFGLAMTSNRALKVDTPEQSRDMLLGVLRGQPGAAHDTVCLNAGVALYAANVAESIAAGLALARAAIASGAALAKLEQLVARTHALA.

5-phospho-alpha-D-ribose 1-diphosphate-binding positions include G84, 87–88 (GD), T92, 94–97 (NIST), 112–120 (KHGGRSVSS), and S124. G84 contacts anthranilate. S96 is a binding site for Mg(2+). An anthranilate-binding site is contributed by R170. Mg(2+) contacts are provided by D229 and E230.

The protein belongs to the anthranilate phosphoribosyltransferase family. Homodimer. Mg(2+) is required as a cofactor.

The catalysed reaction is N-(5-phospho-beta-D-ribosyl)anthranilate + diphosphate = 5-phospho-alpha-D-ribose 1-diphosphate + anthranilate. It participates in amino-acid biosynthesis; L-tryptophan biosynthesis; L-tryptophan from chorismate: step 2/5. In terms of biological role, catalyzes the transfer of the phosphoribosyl group of 5-phosphorylribose-1-pyrophosphate (PRPP) to anthranilate to yield N-(5'-phosphoribosyl)-anthranilate (PRA). The protein is Anthranilate phosphoribosyltransferase of Verminephrobacter eiseniae (strain EF01-2).